The chain runs to 298 residues: Inosose dehydratase (298 aa).

This sequence belongs to the IolE/MocC family. Requires glutathione as cofactor. It depends on Co(2+) as a cofactor. Mn(2+) is required as a cofactor.

The enzyme catalyses scyllo-inosose = 3D-3,5/4-trihydroxycyclohexane-1,2-dione + H2O. It functions in the pathway polyol metabolism; myo-inositol degradation into acetyl-CoA; acetyl-CoA from myo-inositol: step 2/7. In terms of biological role, catalyzes the dehydration of inosose (2-keto-myo-inositol, 2KMI or 2,4,6/3,5-pentahydroxycyclohexanone) to 3D-(3,5/4)-trihydroxycyclohexane-1,2-dione (D-2,3-diketo-4-deoxy-epi-inositol). The sequence is that of Inosose dehydratase from Clostridium botulinum (strain Alaska E43 / Type E3).